A 437-amino-acid polypeptide reads, in one-letter code: Methylenetetrahydrofolate--tRNA-(uracil-5-)-methyltransferase TrmFO (437 aa).

FAD is bound at residue 10–15 (GAGLAG).

This sequence belongs to the MnmG family. TrmFO subfamily. FAD is required as a cofactor.

Its subcellular location is the cytoplasm. It carries out the reaction uridine(54) in tRNA + (6R)-5,10-methylene-5,6,7,8-tetrahydrofolate + NADH + H(+) = 5-methyluridine(54) in tRNA + (6S)-5,6,7,8-tetrahydrofolate + NAD(+). It catalyses the reaction uridine(54) in tRNA + (6R)-5,10-methylene-5,6,7,8-tetrahydrofolate + NADPH + H(+) = 5-methyluridine(54) in tRNA + (6S)-5,6,7,8-tetrahydrofolate + NADP(+). Its function is as follows. Catalyzes the folate-dependent formation of 5-methyl-uridine at position 54 (M-5-U54) in all tRNAs. The chain is Methylenetetrahydrofolate--tRNA-(uracil-5-)-methyltransferase TrmFO from Lysinibacillus sphaericus (strain C3-41).